Here is a 247-residue protein sequence, read N- to C-terminus: ATP synthase subunit a, chloroplastic (247 aa).

The next 5 helical transmembrane spans lie at 36 to 56 (GQVL…SIFG), 95 to 115 (VPFI…GALV), 134 to 154 (INTT…AGFS), 199 to 219 (LVVG…LMLL), and 220 to 240 (GLFT…AYIG).

This sequence belongs to the ATPase A chain family. F-type ATPases have 2 components, CF(1) - the catalytic core - and CF(0) - the membrane proton channel. CF(1) has five subunits: alpha(3), beta(3), gamma(1), delta(1), epsilon(1). CF(0) has four main subunits: a, b, b' and c.

Its subcellular location is the plastid. It is found in the chloroplast thylakoid membrane. In terms of biological role, key component of the proton channel; it plays a direct role in the translocation of protons across the membrane. This chain is ATP synthase subunit a, chloroplastic, found in Mesostigma viride (Green alga).